A 488-amino-acid polypeptide reads, in one-letter code: N-succinylglutamate 5-semialdehyde dehydrogenase (488 aa).

Residue 221 to 226 (GSSRTG) coordinates NAD(+). Catalysis depends on residues glutamate 244 and cysteine 278.

It belongs to the aldehyde dehydrogenase family. AstD subfamily.

The catalysed reaction is N-succinyl-L-glutamate 5-semialdehyde + NAD(+) + H2O = N-succinyl-L-glutamate + NADH + 2 H(+). It participates in amino-acid degradation; L-arginine degradation via AST pathway; L-glutamate and succinate from L-arginine: step 4/5. In terms of biological role, catalyzes the NAD-dependent reduction of succinylglutamate semialdehyde into succinylglutamate. This chain is N-succinylglutamate 5-semialdehyde dehydrogenase, found in Pseudomonas syringae pv. tomato (strain ATCC BAA-871 / DC3000).